We begin with the raw amino-acid sequence, 237 residues long: uncharacterized protein (237 aa).

The N-acetyltransferase domain maps to 119–237 (VTVRRLTPTD…PAGLDGGLPA (119 aa)).

This is an uncharacterized protein from Streptomyces virginiae (Streptomyces cinnamonensis).